We begin with the raw amino-acid sequence, 467 residues long: Acyl-lipid (8-3)-desaturase B (467 aa).

The Cytochrome b5 heme-binding domain maps to 12–89 (LKLYTWDEVS…IKQYEIGYIS (78 aa)). Heme-binding residues include histidine 47 and histidine 70. 2 helical membrane passes run 123 to 143 (VSVGVFTRMVLIYLFLFVTYY) and 152 to 172 (FWLNCIFAVLYGVANSLFGLH). The short motif at 175–179 (HDACH) is the Histidine box-1 element. Residues 187–207 (MTWKILGATFDLFAGASFYAW) traverse the membrane as a helical segment. A Histidine box-2 motif is present at residues 211 to 216 (HVIGHH). Helical transmembrane passes span 293–313 (AIFILGKLVFIISRFILPLIY) and 317–337 (FSHLICFFLISELVLGWYLAI). Residues 400–404 (QVIHH) carry the Histidine box-3 motif.

The protein belongs to the fatty acid desaturase type 1 family. It depends on Fe(2+) as a cofactor.

The protein resides in the membrane. The enzyme catalyses an (8Z,11Z,14Z)-icosatrienoyl-containing glycerolipid + 2 Fe(II)-[cytochrome b5] + O2 + 2 H(+) = (5Z,8Z,11Z,14Z)-eicosatetraenoyl-containing glycerolipid + 2 Fe(III)-[cytochrome b5] + 2 H2O. It carries out the reaction an (8Z,11Z,14Z,17Z)-eicosatetraenoyl-containing glycerolipid + 2 Fe(II)-[cytochrome b5] + O2 + 2 H(+) = a (5Z,8Z,11Z,14Z,17Z)-eicosapentaenoyl-containing glycerolipid + 2 Fe(III)-[cytochrome b5] + 2 H2O. In terms of biological role, fatty acid desaturase that introduces a cis double bond at the 5-position in 18-carbon polyunsaturated fatty acids. The sequence is that of Acyl-lipid (8-3)-desaturase B (fadB) from Dictyostelium discoideum (Social amoeba).